The chain runs to 93 residues: Sec-independent protein translocase protein TatA (93 aa).

A helical transmembrane segment spans residues 1 to 21 (MGAMSPWHWAIVALVVVILFG). The interval 44 to 93 (KEMQNDNSTPAPTAQQSAPAELPVADTTTAPVTPPAPVQPQPQHTEPKSA) is disordered. Residues 51-74 (STPAPTAQQSAPAELPVADTTTAP) show a composition bias toward low complexity.

This sequence belongs to the TatA/E family. The Tat system comprises two distinct complexes: a TatABC complex, containing multiple copies of TatA, TatB and TatC subunits, and a separate TatA complex, containing only TatA subunits. Substrates initially bind to the TatABC complex, which probably triggers association of the separate TatA complex to form the active translocon.

The protein localises to the cell membrane. Part of the twin-arginine translocation (Tat) system that transports large folded proteins containing a characteristic twin-arginine motif in their signal peptide across membranes. TatA could form the protein-conducting channel of the Tat system. This is Sec-independent protein translocase protein TatA from Rhodococcus opacus (strain B4).